The sequence spans 205 residues: Guanylate kinase (205 aa).

The Guanylate kinase-like domain occupies proline 17 to leucine 195. Glycine 24–serine 31 is a binding site for ATP.

The protein belongs to the guanylate kinase family.

It localises to the cytoplasm. It carries out the reaction GMP + ATP = GDP + ADP. In terms of biological role, essential for recycling GMP and indirectly, cGMP. The sequence is that of Guanylate kinase from Streptomyces kasugaensis.